The sequence spans 235 residues: MICOS complex subunit MIC25 (235 aa).

Residue Gly-2 is the site of N-myristoyl glycine attachment. 2 positions are modified to phosphoserine: Ser-13 and Ser-31. Disordered stretches follow at residues 31-90 and 106-132; these read SENV…VKRY and KRER…HEEQ. The stretch at 129-176 forms a coiled coil; that stretch reads HEEQKSVRLARELESREAELRRRDTFYKEQLERIERKNAEMYKLSSEQ. Residues 194–235 enclose the CHCH domain; the sequence is EPVCSGLQAQILHCYRDRPHEVLLCSDLVKAYQRCVSAAHKG. 2 consecutive short sequence motifs (cx9C motif) follow at residues 197-207 and 218-228; these read CSGLQAQILHC and CSDLVKAYQRC. 2 disulfide bridges follow: Cys-197/Cys-228 and Cys-207/Cys-218.

The protein belongs to the MICOS complex subunit Mic19 family. Metazoan Mic25 subfamily. Component of the mitochondrial contact site and cristae organizing system (MICOS) complex, composed of at least MICOS10/MIC10, CHCHD3/MIC19, CHCHD6/MIC25, APOOL/MIC27, IMMT/MIC60, APOO/MIC23/MIC26 and MICOS13/MIC13. This complex was also known under the names MINOS or MitOS complex. The MICOS complex associates with mitochondrial outer membrane proteins SAMM50, MTX1 and MTX2 (together described as components of the mitochondrial outer membrane sorting assembly machinery (SAM) complex) and DNAJC11, mitochondrial inner membrane protein TMEM11 and with HSPA9. The MICOS and SAM complexes together with DNAJC11 are part of a large protein complex spanning both membranes termed the mitochondrial intermembrane space bridging (MIB) complex. Interacts with DISC1. Interacts with DISC1. Interacts with IMMT/MIC60. As to quaternary structure, (Microbial infection) Interacts with human cytomegalovirus protein UL37 isoform vMIA; this interaction rewires mitochondria by engaging the conserved MICOS complex.

The protein localises to the mitochondrion inner membrane. Its subcellular location is the mitochondrion. In terms of biological role, component of the MICOS complex, a large protein complex of the mitochondrial inner membrane that plays crucial roles in the maintenance of crista junctions, inner membrane architecture, and formation of contact sites to the outer membrane. This is MICOS complex subunit MIC25 (CHCHD6) from Homo sapiens (Human).